The following is a 332-amino-acid chain: Melanocortin receptor 4 (332 aa).

At 1–43 (MNSTLQHGMHTSLHFWNRSTYGQHSNATESLGKGYPDGGCYEQ) the chain is on the extracellular side. N-linked (GlcNAc...) asparagine glycosylation is found at Asn-2, Asn-17, and Asn-26. Intrachain disulfides connect Cys-40–Cys-279 and Cys-271–Cys-277. A helical membrane pass occupies residues 44-69 (LFVSPEVFVTLGVISLLENILVIVAI). The Cytoplasmic segment spans residues 70–81 (AKNKNLHSPMYF). A helical transmembrane segment spans residues 82 to 106 (FICSLAVADMLVSVSNGSETIVITL). Ca(2+) is bound by residues Glu-100, Asp-122, and Asp-126. The Extracellular segment spans residues 107–123 (LNSTDTDAQSFTVNIDN). Residues 124–145 (VIDSVICSSLLASICSLLSIAV) form a helical membrane-spanning segment. The Cytoplasmic portion of the chain corresponds to 146 to 165 (DRYFTIFYALQYHNIMTVRR). Residues 166-186 (VGIIISCIWAACTVSGILFII) traverse the membrane as a helical segment. The Extracellular portion of the chain corresponds to 187 to 191 (YSDST). Residues 192–215 (AVIICLITMFFTMLALMASLYVHM) form a helical membrane-spanning segment. Residues 216–248 (FLMARLHIKRIAVLPGTGTIRQGANMKGAITLT) lie on the Cytoplasmic side of the membrane. A helical transmembrane segment spans residues 249–271 (ILIGVFVVCWAPFFLHLIFYISC). Residues 272 to 280 (PQNPYCVCF) are Extracellular-facing. Residues 281–304 (MSHFNLYLILIMCNSIIDPLIYAL) traverse the membrane as a helical segment. Residues 305–332 (RSQELRKTFKEIICCYPLGGLCDLSSRY) are Cytoplasmic-facing. Residue Cys-318 is the site of S-palmitoyl cysteine attachment.

Belongs to the G-protein coupled receptor 1 family. As to quaternary structure, homodimer; disulfide-linked, also forms higher order oligomers. Interacts with GNAS. Interacts with ATRNL1. Interacts with MGRN1; this interaction competes with GNAS-binding and thus inhibits agonist-induced cAMP production. Interacts with MRAP and MRAP2; these associated factors increase ligand-sensitivity and generation of cAMP.

The protein localises to the cell membrane. Hormone receptor that acts as a key component of the leptin-melanocortin pathway at the intersection of homeostatic maintenance of energetic state. Plays a role in regulating food intake: activation by a stimulating hormone such as anorexigenic alpha-melanocyte stimulating hormone (alpha-MSH) inhibits appetite, whereas binding to a natural antagonist like Agouti-related protein/AGRP promotes appetite. G-protein-coupled receptor that activates conventional Galphas signaling leading to induction of anorexogenic signaling in the hypothalamus to result in negative energy balance. Regulates the firing activity of neurons from the hypothalamus by alpha-MSH and AGRP independently of Galphas signaling by ligand-induced coupling of closure of inwardly rectifying potassium channel KCNJ13. In intestinal epithelial cells, plays a role in the inhibition of hepatic glucose production via nesfatin-1/NUCB2 leading to increased cyclic adenosine monophosphate (cAMP) levels and glucagon-like peptide 1 (GLP-1) secretion in the intestinal epithelium. This is Melanocortin receptor 4 (MC4R) from Vulpes vulpes (Red fox).